Consider the following 492-residue polypeptide: Coagulation factor X (492 aa).

The N-terminal stretch at 1 to 23 is a signal peptide; sequence MAGLLHLVLLSTALGGLLRPAGS. The propeptide occupies 24-40; that stretch reads VFLPRDQAHRVLQRARR. Residues 41 to 85 enclose the Gla domain; the sequence is ANSFLEEVKQGNLERECLEEACSLEEAREVFEDAEQTDEFWSKYK. 12 positions are modified to 4-carboxyglutamate: Glu46, Glu47, Glu54, Glu56, Glu59, Glu60, Glu65, Glu66, Glu69, Glu72, Glu75, and Glu79. Residues Cys57 and Cys62 are joined by a disulfide bond. The EGF-like 1; calcium-binding domain occupies 86-122; sequence DGDQCEGHPCLNQGHCKDGIGDYTCTCAEGFEGKNCE. Disulfide bonds link Cys90–Cys101, Cys95–Cys110, Cys112–Cys121, Cys129–Cys140, Cys136–Cys149, Cys151–Cys164, Cys172–Cys341, Cys240–Cys245, Cys260–Cys276, Cys389–Cys403, and Cys414–Cys442. The residue at position 103 (Asp103) is a (3R)-3-hydroxyaspartate. An EGF-like 2 domain is found at 125-165; the sequence is TREICSLDNGGCDQFCREERSEVRCSCAHGYVLGDDSKSCV. A propeptide spans 183–233 (activation peptide); that stretch reads WAIHTSEDALDASELEHYDPADLSPTESSLDLLGLNRTEPSAGEDGSQVVR. Position 200 is a sulfotyrosine (Tyr200). A glycan (O-linked (GalNAc...) threonine) is linked at Thr208. N-linked (GlcNAc...) asparagine glycosylation occurs at Asn218. Residues 234 to 466 form the Peptidase S1 domain; that stretch reads IVGGRDCAEG…FLKWIDKIMK (233 aa). Residues His275 and Asp321 each act as charge relay system in the active site. Ser418 serves as the catalytic Charge relay system. A disordered region spans residues 472–492; the sequence is AGSRGHSEAPATWTVPPPLPL. Positions 476–492 are cleaved as a propeptide — may be removed but is not necessary for activation; sequence GHSEAPATWTVPPPLPL. Residue Thr485 is glycosylated (O-linked (GalNAc...) threonine).

It belongs to the peptidase S1 family. In terms of assembly, the two chains are formed from a single-chain precursor by the excision of two Arg residues and are held together by 1 or more disulfide bonds. Forms a heterodimer with SERPINA5. Interacts (activated) with guianensin, an anticoagulant protein from Simulium guianense saliva. Interacts (activated) with simukunin, an anticoagulant protein from Simulium vittatum saliva. Post-translationally, the vitamin K-dependent, enzymatic carboxylation of some glutamate residues allows the modified protein to bind calcium. In terms of processing, N- and O-glycosylated. Proteolytically cleaved and activated by cathepsin CTSG. The activation peptide is cleaved by factor IXa (in the intrinsic pathway), or by factor VIIa (in the extrinsic pathway). Post-translationally, the iron and 2-oxoglutarate dependent 3-hydroxylation of aspartate and asparagine is (R) stereospecific within EGF domains.

It is found in the secreted. The catalysed reaction is Selective cleavage of Arg-|-Thr and then Arg-|-Ile bonds in prothrombin to form thrombin.. Its activity is regulated as follows. Inhibited by SERPINA5. In terms of biological role, factor Xa is a vitamin K-dependent glycoprotein that converts prothrombin to thrombin in the presence of factor Va, calcium and phospholipid during blood clotting. Factor Xa activates pro-inflammatory and pro-fibrotic signaling pathways in a protease-activated receptor (PAR)-dependent manner. In Bos taurus (Bovine), this protein is Coagulation factor X (F10).